Reading from the N-terminus, the 222-residue chain is Sigma non-opioid intracellular receptor 1 (222 aa).

Residues 1–6 (MSLIRT) are Lumenal-facing. A helical transmembrane segment spans residues 7-29 (ILKLVVVVGFLSLTVQFIRHWMA). Topologically, residues 30–222 (NKQYVFTKEE…STFLTESGVL (193 aa)) are cytoplasmic. The important for ligand-binding stretch occupies residues 97-104 (SLTEYVLL). The C-terminal hydrophobic region stretch occupies residues 175–222 (FIPSTLGFALADTMFSTQDFLTLFYTARVYVKGMILEASTFLTESGVL).

Belongs to the ERG2 family. As to quaternary structure, homotrimer.

The protein localises to the nucleus inner membrane. It is found in the nucleus outer membrane. It localises to the nucleus envelope. The protein resides in the cytoplasmic vesicle. Its subcellular location is the endoplasmic reticulum membrane. The protein localises to the membrane. Functionally, may function in lipid transport from the endoplasmic reticulum and be involved in a wide array of cellular functions probably through regulation of the biogenesis of lipid microdomains at the plasma membrane. May regulate calcium efflux at the endoplasmic reticulum. This Danio rerio (Zebrafish) protein is Sigma non-opioid intracellular receptor 1 (sigmar1).